The primary structure comprises 607 residues: Glutamine--fructose-6-phosphate aminotransferase [isomerizing] (607 aa).

The Nucleophile; for GATase activity role is filled by Cys2. The Glutamine amidotransferase type-2 domain maps to 2 to 217; that stretch reads CGIIGIIGND…DGDWAVLTRN (216 aa). 2 SIS domains span residues 283-422 and 455-597; these read IGID…ARGA and VCHD…VDQP. Lys602 acts as the For Fru-6P isomerization activity in catalysis.

Homodimer.

It is found in the cytoplasm. It catalyses the reaction D-fructose 6-phosphate + L-glutamine = D-glucosamine 6-phosphate + L-glutamate. Functionally, catalyzes the first step in hexosamine metabolism, converting fructose-6P into glucosamine-6P using glutamine as a nitrogen source. The protein is Glutamine--fructose-6-phosphate aminotransferase [isomerizing] of Brucella abortus biovar 1 (strain 9-941).